The sequence spans 205 residues: Adenylyl-sulfate kinase (205 aa).

An ATP-binding site is contributed by 31–38 (GLSGAGKS). Ser105 acts as the Phosphoserine intermediate in catalysis.

Belongs to the APS kinase family.

It catalyses the reaction adenosine 5'-phosphosulfate + ATP = 3'-phosphoadenylyl sulfate + ADP + H(+). The protein operates within sulfur metabolism; hydrogen sulfide biosynthesis; sulfite from sulfate: step 2/3. In terms of biological role, catalyzes the synthesis of activated sulfate. This chain is Adenylyl-sulfate kinase, found in Shewanella sp. (strain MR-4).